Here is a 361-residue protein sequence, read N- to C-terminus: Glucose 1-dehydrogenase (361 aa).

A Zn(2+)-binding site is contributed by Cys-41. Residue Thr-43 participates in substrate binding. Residues His-68 and Glu-69 each contribute to the Zn(2+) site. Residues Glu-119, Glu-156, and Asn-160 each coordinate substrate. Glu-156 is a binding site for Zn(2+). NADP(+)-binding positions include 216–218, 275–277, 304–306, and Lys-349; these read NRH, FGT, and SVD. Asp-306 contacts substrate.

It belongs to the zinc-containing alcohol dehydrogenase family. Glucose 1-dehydrogenase subfamily. In terms of assembly, homotetramer. Zn(2+) is required as a cofactor.

It catalyses the reaction D-glucose + NAD(+) = D-glucono-1,5-lactone + NADH + H(+). It carries out the reaction D-glucose + NADP(+) = D-glucono-1,5-lactone + NADPH + H(+). The catalysed reaction is D-galactose + NAD(+) = D-galactono-1,4-lactone + NADH + H(+). The enzyme catalyses D-galactose + NADP(+) = D-galactono-1,5-lactone + NADPH + H(+). In terms of biological role, catalyzes the NAD(P)(+)-dependent oxidation of D-glucose to D-gluconate via gluconolactone. Is also significantly active with galactose as substrate, but not with mannose or glucose 6-phosphate. Can utilize both NAD(+) and NADP(+) as electron acceptor, with a marked preference for NADP(+). Physiologically, may be involved in the degradation of both glucose and galactose through a non-phosphorylative variant of the Entner-Doudoroff pathway. The chain is Glucose 1-dehydrogenase from Thermoplasma acidophilum (strain ATCC 25905 / DSM 1728 / JCM 9062 / NBRC 15155 / AMRC-C165).